The primary structure comprises 639 residues: Elongation factor 4 (639 aa).

The region spanning 39–220 (AQIRNFCIIA…EVVRLVPPPT (182 aa)) is the tr-type G domain. GTP-binding positions include 51–56 (DHGKST) and 167–170 (NKID).

It belongs to the TRAFAC class translation factor GTPase superfamily. Classic translation factor GTPase family. LepA subfamily.

It localises to the cell membrane. It carries out the reaction GTP + H2O = GDP + phosphate + H(+). Functionally, required for accurate and efficient protein synthesis under certain stress conditions. May act as a fidelity factor of the translation reaction, by catalyzing a one-codon backward translocation of tRNAs on improperly translocated ribosomes. Back-translocation proceeds from a post-translocation (POST) complex to a pre-translocation (PRE) complex, thus giving elongation factor G a second chance to translocate the tRNAs correctly. Binds to ribosomes in a GTP-dependent manner. The sequence is that of Elongation factor 4 from Mycobacterium sp. (strain JLS).